Consider the following 290-residue polypeptide: Alpha-mannosidase (290 aa).

Residue Asp17 is the Nucleophile of the active site. Asn64 is a glycosylation site (N-linked (GlcNAc...) asparagine).

This sequence belongs to the glycosyl hydrolase 38 family. As to quaternary structure, dimer. Zn(2+) serves as cofactor.

It catalyses the reaction Hydrolysis of terminal, non-reducing alpha-D-mannose residues in alpha-D-mannosides.. Its activity is regulated as follows. Inhibited by swainsonine but not by 1-desoxymannojirimycin. Functionally, liberates mannose from p-nitrophenyl-alpha-D-mannoside. The chain is Alpha-mannosidase from Lablab purpureus (Hyacinth bean).